The following is a 917-amino-acid chain: PAX3- and PAX7-binding protein 1 (917 aa).

Residues 1-11 (MFRKARRVNVR) are compositionally biased toward basic residues. Disordered regions lie at residues 1-123 (MFRK…FKVK), 143-205 (LEKS…GAFS), and 229-275 (RKKR…RIVF). S16 carries the post-translational modification Phosphoserine. Positions 16 to 28 (SEEEERERDEEQE) are enriched in acidic residues. Gly residues-rich tracts occupy residues 40-50 (EEAGPGGGDRA) and 73-85 (AEAG…GAEP). A Glycyl lysine isopeptide (Lys-Gly) (interchain with G-Cter in SUMO1); alternate cross-link involves residue K149. A Glycyl lysine isopeptide (Lys-Gly) (interchain with G-Cter in SUMO2); alternate cross-link involves residue K149. Residues S154, S155, and S158 each carry the phosphoserine modification. Basic and acidic residues predominate over residues 161-172 (PLDKTGHVKDTN). Residues 183 to 193 (GEDEMDMESEK) are compositionally biased toward acidic residues. Residue S191 is modified to Phosphoserine. Over residues 234–256 (MARELGDFTPHDNEPGKGRLVRE) the composition is skewed to basic and acidic residues. Over residues 257 to 268 (DENDASDDEDDD) the composition is skewed to acidic residues. Phosphoserine is present on residues S262 and S295. Disordered stretches follow at residues 362 to 381 (SSDA…TPSN) and 530 to 564 (AERE…EETS). The interval 378–558 (TPSNEMTPVT…MADHLEGLSS (181 aa)) is necessary and sufficient for interaction with PAX7. Basic and acidic residues predominate over residues 542-554 (AREQTGKMADHLE). Residues S557 and S558 each carry the phosphoserine modification. Phosphothreonine is present on T563.

Belongs to the GCF family. In terms of assembly, interacts with PAX3 and PAX7. Interacts with WDR5; associates with a histone methyltransferase (HMT) complex composed at least of RBBP5, ASH2L, SET1, SET2 and KMT2A/MLL1, KMT2D/MLL2, KMT2C/MLL3 and KMT2B/MLL4 through direct interaction with WDR5. As to expression, ubiquitous.

The protein resides in the nucleus. In terms of biological role, adapter protein linking the transcription factors PAX3 and PAX7 to the histone methylation machinery and involved in myogenesis. Associates with a histone methyltransferase complex that specifically mediates dimethylation and trimethylation of 'Lys-4' of histone H3. Mediates the recruitment of that complex to the transcription factors PAX3 and PAX7 on chromatin to regulate the expression of genes involved in muscle progenitor cells proliferation including ID3 and CDC20. The polypeptide is PAX3- and PAX7-binding protein 1 (PAXBP1) (Homo sapiens (Human)).